A 147-amino-acid chain; its full sequence is Large ribosomal subunit protein uL15 (147 aa).

Positions Met1–Pro62 are disordered. 2 stretches are compositionally biased toward gly residues: residues Arg21–Ser31 and Ala42–Gly52.

The protein belongs to the universal ribosomal protein uL15 family. Part of the 50S ribosomal subunit.

Binds to the 23S rRNA. The chain is Large ribosomal subunit protein uL15 from Desulfitobacterium hafniense (strain DSM 10664 / DCB-2).